Consider the following 191-residue polypeptide: MSIFRFSQREIIDLTISVLAIAFIFSYPNFSILVFIISLIAVGSGFIFHELMHRTVARKYGAWSEFRAWYEGLILGFILKLVFGATFIAPGAVYIYKDYLTPEENGKIALAGPLTNVALAFVFFILMLIFKPGSLLYWIGIFGFHINLFLAGFNMLPIPPFDGEKVLKWNPFIWAIVGLPLIGYMLYMMFW.

A helical membrane pass occupies residues 20 to 40; that stretch reads AIAFIFSYPNFSILVFIISLI. Histidine 49 contributes to the Zn(2+) binding site. Residue glutamate 50 is part of the active site. Histidine 53 serves as a coordination point for Zn(2+). The next 4 helical transmembrane spans lie at 73-93, 110-130, 133-153, and 171-191; these read LILGFILKLVFGATFIAPGAV, LAGPLTNVALAFVFFILMLIF, GSLLYWIGIFGFHINLFLAGF, and PFIWAIVGLPLIGYMLYMMFW.

This sequence belongs to the peptidase M50B family. It depends on Zn(2+) as a cofactor.

Its subcellular location is the cell membrane. The protein is Putative zinc metalloprotease MJ0611 of Methanocaldococcus jannaschii (strain ATCC 43067 / DSM 2661 / JAL-1 / JCM 10045 / NBRC 100440) (Methanococcus jannaschii).